Consider the following 504-residue polypeptide: Probable cytochrome P450 305a1 (504 aa).

A heme-binding site is contributed by Cys-450.

This sequence belongs to the cytochrome P450 family. Heme is required as a cofactor.

The protein localises to the endoplasmic reticulum membrane. It is found in the microsome membrane. Functionally, may be involved in the metabolism of insect hormones and in the breakdown of synthetic insecticides. The protein is Probable cytochrome P450 305a1 (Cyp305a1) of Drosophila melanogaster (Fruit fly).